We begin with the raw amino-acid sequence, 476 residues long: UDP-glucose 6-dehydrogenase (476 aa).

NAD(+)-binding positions include 7 to 12 (GAGYVG), D32, R37, 85 to 89 (VNTPT), 126 to 127 (ST), and E161. Substrate-binding positions include 157–161 (EFLAE), 216–220 (KLAAN), R256, and 263–269 (QASVGFG). Residue C272 is the Nucleophile of the active site. 272–275 (CFQK) contributes to the NAD(+) binding site. 334-335 (FK) provides a ligand contact to substrate. R342 contributes to the NAD(+) binding site. R439 lines the substrate pocket.

This sequence belongs to the UDP-glucose/GDP-mannose dehydrogenase family.

The catalysed reaction is UDP-alpha-D-glucose + 2 NAD(+) + H2O = UDP-alpha-D-glucuronate + 2 NADH + 3 H(+). It functions in the pathway nucleotide-sugar biosynthesis; UDP-alpha-D-glucuronate biosynthesis; UDP-alpha-D-glucuronate from UDP-alpha-D-glucose: step 1/1. Functionally, involved in the biosynthesis of glycosaminoglycans; hyaluronan, chondroitin sulfate and heparan sulfate. Required for wingless signaling in different tissues. The sequence is that of UDP-glucose 6-dehydrogenase (sgl) from Drosophila melanogaster (Fruit fly).